Consider the following 159-residue polypeptide: Afifavidin (159 aa).

The N-terminal stretch at 1 to 23 is a signal peptide; that stretch reads MRRLASLAVALPLLAVVASPALA. In terms of domain architecture, Avidin-like spans 36–151; it reads GVPAVSSSWV…GSDTFTLVNK (116 aa). Residues Asn-46, Ser-50, Tyr-66, Asn-68, and Gly-74 each contribute to the biotin site. Cysteines 75 and 104 form a disulfide. Biotin-binding residues include Ser-106, Thr-108, and Asp-144.

It belongs to the avidin/streptavidin family. In terms of assembly, exhibits a dynamic oligomeric assembly: the apo form self-assembles mostly into toroid-shaped homooctamers, with a small fraction of homodimers, yet upon biotin binding the intact afifavidin consists solely of the dimer.

The protein resides in the secreted. The exact role played by afifavidin is still obscure. Forms a strong non-covalent complex with biotin and 2-iminobiotin. The protein is Afifavidin of Afifella pfennigii (Rhodobium pfennigii).